The sequence spans 101 residues: Large ribosomal subunit protein uL24 (101 aa).

The protein belongs to the universal ribosomal protein uL24 family. As to quaternary structure, part of the 50S ribosomal subunit.

In terms of biological role, one of two assembly initiator proteins, it binds directly to the 5'-end of the 23S rRNA, where it nucleates assembly of the 50S subunit. Functionally, one of the proteins that surrounds the polypeptide exit tunnel on the outside of the subunit. In Paracoccus denitrificans (strain Pd 1222), this protein is Large ribosomal subunit protein uL24.